Here is a 177-residue protein sequence, read N- to C-terminus: Large ribosomal subunit protein uL6 (177 aa).

It belongs to the universal ribosomal protein uL6 family. As to quaternary structure, part of the 50S ribosomal subunit.

This protein binds to the 23S rRNA, and is important in its secondary structure. It is located near the subunit interface in the base of the L7/L12 stalk, and near the tRNA binding site of the peptidyltransferase center. This is Large ribosomal subunit protein uL6 from Dinoroseobacter shibae (strain DSM 16493 / NCIMB 14021 / DFL 12).